A 368-amino-acid chain; its full sequence is MQPTRQTPSATAAISGGGGASAGAIETDALVIGAGPVGLFQVFQLGLQDLRCHVVDVLSQPGGQCAELYPAKPIYDIPALPVCSGTELVERLLQQVAPFDPVLHLGQEVESLAPRADGRFDIGTSAGTQFIARAVFIAAGVGAFSPRRLKLPGLDTLAASCVSHQAPDVSACQGQTVLVHGGDDRALDWACRLAEHGVAVSLLYRRDVYPAAPEQVRRLELLASQGRVTRRVGQPTQARADAAGQLTGVDHLDPSGQTHHEPATRLFVSLGLSPRLGPLSSWGLQMERKLLDVEPSRFETSLPGVYAVGDINSYPGKLKLIVCGFHEATLAAWAAAHRLRPDAPHHLEYTTSSARLQRLLGVLPRGAE.

Positions 56, 64, 69, 109, 144, 310, and 351 each coordinate FAD.

The protein belongs to the ferredoxin--NADP reductase type 2 family. In terms of assembly, homodimer. FAD serves as cofactor.

It carries out the reaction 2 reduced [2Fe-2S]-[ferredoxin] + NADP(+) + H(+) = 2 oxidized [2Fe-2S]-[ferredoxin] + NADPH. The polypeptide is Ferredoxin--NADP reductase (Leptothrix cholodnii (strain ATCC 51168 / LMG 8142 / SP-6) (Leptothrix discophora (strain SP-6))).